The following is a 274-amino-acid chain: Large ribosomal subunit protein uL2 (274 aa).

Disordered stretches follow at residues 28-59 and 222-274; these read APYA…GGHK and GAAM…RRTK. Positions 39 to 49 are enriched in polar residues; it reads KSGGRNNNGRI. Over residues 229-239 the composition is skewed to basic and acidic residues; it reads DHPHGGGEGRS.

The protein belongs to the universal ribosomal protein uL2 family. Part of the 50S ribosomal subunit. Forms a bridge to the 30S subunit in the 70S ribosome.

One of the primary rRNA binding proteins. Required for association of the 30S and 50S subunits to form the 70S ribosome, for tRNA binding and peptide bond formation. It has been suggested to have peptidyltransferase activity; this is somewhat controversial. Makes several contacts with the 16S rRNA in the 70S ribosome. In Marinomonas sp. (strain MWYL1), this protein is Large ribosomal subunit protein uL2.